A 73-amino-acid polypeptide reads, in one-letter code: Putative beta-defensin 108A (73 aa).

A signal peptide spans 1–22 (MRIAVLFFTIFFFMSQVLPAKG). Disulfide bonds link cysteine 28–cysteine 55, cysteine 35–cysteine 49, and cysteine 39–cysteine 56.

It belongs to the beta-defensin family.

Its subcellular location is the secreted. In terms of biological role, has antibacterial activity. The polypeptide is Putative beta-defensin 108A (Homo sapiens (Human)).